The primary structure comprises 290 residues: Glutamyl-Q tRNA(Asp) synthetase (290 aa).

L-glutamate is bound by residues 9–13 (RFAPS) and Glu45. A 'HIGH' region motif is present at residues 12 to 22 (PSPSGSLHFGS). Zn(2+) contacts are provided by Cys101, Cys103, Tyr115, and Cys119. Residues Tyr170 and Arg188 each contribute to the L-glutamate site. The short motif at 226–230 (KLSKQ) is the 'KMSKS' region element. Residue Lys229 coordinates ATP.

It belongs to the class-I aminoacyl-tRNA synthetase family. GluQ subfamily. It depends on Zn(2+) as a cofactor.

Its function is as follows. Catalyzes the tRNA-independent activation of glutamate in presence of ATP and the subsequent transfer of glutamate onto a tRNA(Asp). Glutamate is transferred on the 2-amino-5-(4,5-dihydroxy-2-cyclopenten-1-yl) moiety of the queuosine in the wobble position of the QUC anticodon. This chain is Glutamyl-Q tRNA(Asp) synthetase, found in Shewanella amazonensis (strain ATCC BAA-1098 / SB2B).